The primary structure comprises 535 residues: MWKYSNKIIYRNVSGNQLWFNRNSSVGGTLSQQTQLELADSRIDEKWQQARSFGEIPGPSLLRMLSFFMPGGALRNTNLIQMNRLMREMYGDIYCIPGMMGKPNAVFTYNPDDFEMTYRNEGVWPIRIGLESLNYYRKIHRPDVFKGVGGLASDQGQEWADIRNKVNPVLMKVQNVRQNLPQLDQISKEFIDKLETQRNPETHTLTTDFHNQLKMWAFESISFVALNTRMGLLSDNPDPNADRLAKHMRDFFNYSFQFDVQPSIWTFYKTAGFKKFLKTYDNITDITSNYIETAMRGFGKNDDGKTKCVLEQLLEHNKKVAVTMVMDMLMAGIDTTSSACLTILYHLARNPSKQEKLRRELLRILPTTKDSLTDQNTKNMPYLRACIKEGLRITSITPGNFRITPKDLVLSGYQVPRGTGVLMGVLELSNDDKYFAQSSEFIPERWLKSDLAPDIQACPAARTRNPFVYLPFGFGPRTCIGKRIAELEIETLLVRLLRSYKVSWLPETPIEYESTIILSPCGDIRFKLEPVGDLM.

C479 is a binding site for heme.

Belongs to the cytochrome P450 family. It depends on heme as a cofactor.

Its subcellular location is the mitochondrion membrane. In Drosophila melanogaster (Fruit fly), this protein is Probable cytochrome P450 12b2, mitochondrial (Cyp12b2).